The following is a 220-amino-acid chain: MSIESSSSESSPNADALHLNSSEVRVLGCLIEKQATNPETYPLTLNALVLACNQKTSRDPVMSLTPGQVGQSLRALEGRGLTRLVMGSRADRWEHRVDKAVELVPAQVILTGLLLLRGPQTVSELLTRSHRMHDFEDSEQLIHQLERLIARGLAMLAPRQSGQREDRYTHLLGDPDDLQELLAARQHAPERNAANPAASQRFDELEARVAALEERLARLE.

This sequence belongs to the UPF0502 family.

The protein is UPF0502 protein PSPPH_2577 of Pseudomonas savastanoi pv. phaseolicola (strain 1448A / Race 6) (Pseudomonas syringae pv. phaseolicola (strain 1448A / Race 6)).